Reading from the N-terminus, the 494-residue chain is Flavin-containing monooxygenase ustF2 (494 aa).

The first 21 residues, 1–21, serve as a signal peptide directing secretion; it reads MANPQTTRVAVVGAGISGVLA. Position 13 to 18 (13 to 18) interacts with FAD; the sequence is GAGISG. The disordered stretch occupies residues 73–93; the sequence is EPSYPAMKPSKADPPATNEQE. Position 250 to 255 (250 to 255) interacts with NADP(+); the sequence is GGGVSS. An N-linked (GlcNAc...) asparagine glycan is attached at Asn-459.

Belongs to the FMO family.

Its pathway is mycotoxin biosynthesis. Its function is as follows. Flavin-containing monooxygenase; part of the gene cluster that mediates the biosynthesis of the secondary metabolite ustiloxin B, an antimitotic tetrapeptide. First, ustA is processed by the subtilisin-like endoprotease Kex2 that is outside the ustiloxin B gene cluster, at the C-terminal side of Arg-Lys, after transfer to Golgi apparatus through the endoplasmic reticulum (ER). Cleavage by KEX2 generates 16 peptides YAIG-I to YAIG-XVI. To process the precursor peptide further, at least two peptidases are necessary to cleave the N-terminal and C-terminal sides of the Tyr-Ala-Ile-Gly core peptide which serves as backbone for the synthesis of ustiloxin B, through cyclization and modification of the tyrosine with a non-protein coding amino acid, norvaline. One of the two peptidases must be the serine peptidase ustP; and the other pepdidase is probably ustH. Macrocyclization of the core peptide derived from ustA requires the tyrosinase ustQ, as well as the homologous oxidases ustYa and ustYb, and leads to the production of the first cyclization product N-desmethylustiloxin F. For the formation of N-desmethylustiloxin F, three oxidation steps are required, hydroxylation at the benzylic position, hydroxylation at either the aromatic ring of Tyr or beta-position of Ile, and oxidative cyclization. UstQ may catalyze the oxidation of a phenol moiety, whereas the ustYa and ustYb are most likely responsible for the remaining two-step oxidations. N-desmethylustiloxin F is then methylated by ustM to yield ustiloxin F which in turn substrate of the cytochrome P450 monooxygenase ustC which catalyzes the formation of S-deoxyustiloxin H. The flavoprotein monooxygenases ustF1 and ustF2 then participate in the modification of the side chain of S-deoxyustiloxin H, leading to the synthesis of an oxime intermediate, via ustiloxin H. Finally, carboxylative dehydration performed by the cysteine desulfurase-like protein ustD yields ustiloxin B. The protein is Flavin-containing monooxygenase ustF2 of Aspergillus flavus (strain ATCC 200026 / FGSC A1120 / IAM 13836 / NRRL 3357 / JCM 12722 / SRRC 167).